A 333-amino-acid chain; its full sequence is MSRPRFLPDNFTLALIATVLLATFLPCSGQTAVVFEWVTNIGIGLLFFLHGAKLSRQAIIAGMTHWRLHLLVFACTFVMFPLLGLALKPALSPMVTPELYLGILFLCALPATVQSSIAFTSLARGNVPAAVCSASVSSLLGVFLTPLLVKLLLGAEGETGNALDAIGKITLQLLVPFIAGQVLRRWIGAWVERNKPVLRYVDQGSILLVVYTAFSAAVIQGLWHEVPWLALLGLTVACCVILALALVLTTVLARRLGFSKEDEITIVFCGSKKSLATGVPMAKVLFATSAVGPMVLPLMLFHQIQLMVCAVLAQRYARRRDDAAAALAEAPSR.

This sequence to E.coli YfeH.

This is an uncharacterized protein from Pseudomonas aeruginosa (strain ATCC 15692 / DSM 22644 / CIP 104116 / JCM 14847 / LMG 12228 / 1C / PRS 101 / PAO1).